Reading from the N-terminus, the 598-residue chain is Aspartate--tRNA(Asp/Asn) ligase (598 aa).

Residue E174 coordinates L-aspartate. Residues 198 to 201 form an aspartate region; it reads QQLK. R220 contributes to the L-aspartate binding site. ATP contacts are provided by residues 220–222 and Q229; that span reads RDE. H458 contributes to the L-aspartate binding site. An ATP-binding site is contributed by E492. L-aspartate is bound at residue R499. Residue 544 to 547 coordinates ATP; it reads GIDR.

The protein belongs to the class-II aminoacyl-tRNA synthetase family. Type 1 subfamily. As to quaternary structure, homodimer.

It localises to the cytoplasm. The enzyme catalyses tRNA(Asx) + L-aspartate + ATP = L-aspartyl-tRNA(Asx) + AMP + diphosphate. Functionally, aspartyl-tRNA synthetase with relaxed tRNA specificity since it is able to aspartylate not only its cognate tRNA(Asp) but also tRNA(Asn). Reaction proceeds in two steps: L-aspartate is first activated by ATP to form Asp-AMP and then transferred to the acceptor end of tRNA(Asp/Asn). This is Aspartate--tRNA(Asp/Asn) ligase from Dehalococcoides mccartyi (strain CBDB1).